Reading from the N-terminus, the 20-residue chain is Unknown protein NF015 from 2D-PAGE (20 aa).

The interval 1–20 is disordered; that stretch reads TPQIQKPAPQFSKTALLPDE.

This is Unknown protein NF015 from 2D-PAGE from Naegleria fowleri (Brain eating amoeba).